The chain runs to 1306 residues: DNA-directed RNA polymerase subunit beta' (1306 aa).

4 residues coordinate Zn(2+): Cys214, Cys285, Cys292, and Cys295. Disordered stretches follow at residues 1234-1263 and 1281-1306; these read LDNG…PNRL and IARA…DDDK. A compositionally biased stretch (basic and acidic residues) spans 1247–1259; that stretch reads QGERDNNNSDKKP.

This sequence belongs to the RNA polymerase beta' chain family. RpoC2 subfamily. In terms of assembly, in cyanobacteria the RNAP catalytic core is composed of 2 alpha, 1 beta, 1 beta', 1 gamma and 1 omega subunit. When a sigma factor is associated with the core the holoenzyme is formed, which can initiate transcription. Requires Zn(2+) as cofactor.

The catalysed reaction is RNA(n) + a ribonucleoside 5'-triphosphate = RNA(n+1) + diphosphate. Its function is as follows. DNA-dependent RNA polymerase catalyzes the transcription of DNA into RNA using the four ribonucleoside triphosphates as substrates. The protein is DNA-directed RNA polymerase subunit beta' of Crocosphaera subtropica (strain ATCC 51142 / BH68) (Cyanothece sp. (strain ATCC 51142)).